A 217-amino-acid polypeptide reads, in one-letter code: CASP-like protein UU4 (217 aa).

Residues 1 to 11 (MYTGQSDHRPE) show a composition bias toward basic and acidic residues. The segment at 1–21 (MYTGQSDHRPEGVGVNPGSPN) is disordered. At 1–61 (MYTGQSDHRP…VKKNINHMSG (61 aa)) the chain is on the cytoplasmic side. Residues 62-82 (LSLGLRVSEFVLSVIAFSLMA) traverse the membrane as a helical segment. Over 83–98 (SAEQNGAVYSTFTSYS) the chain is Extracellular. Residues 99–119 (FVLAINVLVALYAIGQIILSV) form a helical membrane-spanning segment. Residues 120-141 (MPLVSGSAPKKLYLFITFGCDQ) lie on the Cytoplasmic side of the membrane. The chain crosses the membrane as a helical span at residues 142-162 (LSAFLLMAAGAAGASVAMLIN). At 163-187 (RKGVIDDYGSGCIDGKITVFCAHAE) the chain is on the extracellular side. A helical transmembrane segment spans residues 188–208 (ASIAFTFLSFFCVMISSYLGV). At 209-217 (YNLAPYLIL) the chain is on the cytoplasmic side.

Belongs to the Casparian strip membrane proteins (CASP) family. In terms of assembly, homodimer and heterodimers.

The protein localises to the cell membrane. This is CASP-like protein UU4 from Physcomitrium patens (Spreading-leaved earth moss).